The chain runs to 797 residues: Short transient receptor potential channel 4-associated protein (797 aa).

Residue Ala2 is modified to N-acetylalanine. The segment at 2–400 (AAAPVAAGSG…VLYVLCVLLM (399 aa)) is interaction with TNFRSF1A.

As to quaternary structure, component of the DCX(TRPC4AP) E3 ubiquitin ligase complex, at least composed of CUL4A, DDB1, TRPC4AP/TRUSS and RBX1. Interacts with MYC. Constitutively associated with TNFRSF1A. Directly interacts with TRADD, TRAF2, CHUK, IKBKB and IKBKG. Interacts with TRPC1, TRPC4 and TRPC5. In terms of assembly, (Microbial infection) Interacts with Hepatitis B virus (HBV) protein X; leading to prevent ubiquitination of TRPC4AP by SKP2. In terms of processing, phosphorylated by GSK3B; phosphorylation is required for ubiquitination. Post-translationally, ubiquitinated by a SCF (SKP1-CUL1-F-box protein) E3 ubiquitin-protein ligase containing SKP2, leading to its degradation. Phosphorylation by GSK3B is required for ubiquitination.

It is found in the cytoplasm. The protein localises to the perinuclear region. It functions in the pathway protein modification; protein ubiquitination. Functionally, substrate-recognition component of a DCX (DDB1-CUL4-X-box) E3 ubiquitin-protein ligase complex required for cell cycle control. The DCX(TRPC4AP) complex specifically mediates the polyubiquitination and subsequent degradation of MYC as part of the DesCEND (destruction via C-end degrons) pathway. The DesCEND (destruction via C-end degrons) pathway recognizes a C-degron located at the extreme C terminus of target proteins, leading to their ubiquitination and degradation. The DCX(TRPC4AP) complex specifically recognizes proteins with an arginine at the minus 3 position (R-3 motif) at the C-terminus, such as MYC, leading to their ubiquitination and degradation. Also participates in the activation of NFKB1 in response to ligation of TNFRSF1A, possibly by linking TNFRSF1A to the IKK signalosome. Involved in JNK activation via its interaction with TRAF2. Also involved in elevation of endoplasmic reticulum Ca(2+) storage reduction in response to CHRM1. The chain is Short transient receptor potential channel 4-associated protein from Homo sapiens (Human).